A 371-amino-acid polypeptide reads, in one-letter code: Probable tRNA sulfurtransferase (371 aa).

The THUMP domain maps to 54-156 (NANIEALSEV…NEMTYFYHKV (103 aa)). ATP is bound by residues 174-175 (LF), 199-200 (NF), lysine 254, glycine 276, and glutamine 285.

It belongs to the ThiI family.

The protein localises to the cytoplasm. It catalyses the reaction [ThiI sulfur-carrier protein]-S-sulfanyl-L-cysteine + a uridine in tRNA + 2 reduced [2Fe-2S]-[ferredoxin] + ATP + H(+) = [ThiI sulfur-carrier protein]-L-cysteine + a 4-thiouridine in tRNA + 2 oxidized [2Fe-2S]-[ferredoxin] + AMP + diphosphate. It carries out the reaction [ThiS sulfur-carrier protein]-C-terminal Gly-Gly-AMP + S-sulfanyl-L-cysteinyl-[cysteine desulfurase] + AH2 = [ThiS sulfur-carrier protein]-C-terminal-Gly-aminoethanethioate + L-cysteinyl-[cysteine desulfurase] + A + AMP + 2 H(+). Its pathway is cofactor biosynthesis; thiamine diphosphate biosynthesis. Catalyzes the ATP-dependent transfer of a sulfur to tRNA to produce 4-thiouridine in position 8 of tRNAs, which functions as a near-UV photosensor. Also catalyzes the transfer of sulfur to the sulfur carrier protein ThiS, forming ThiS-thiocarboxylate. This is a step in the synthesis of thiazole, in the thiamine biosynthesis pathway. The sulfur is donated as persulfide by IscS. This chain is Probable tRNA sulfurtransferase, found in Saccharolobus solfataricus (strain ATCC 35092 / DSM 1617 / JCM 11322 / P2) (Sulfolobus solfataricus).